A 314-amino-acid polypeptide reads, in one-letter code: Chlorinase cctP2 (314 aa).

Positions 1 to 14 (MEGKTSRYQDEAHD) are enriched in basic and acidic residues. The tract at residues 1-24 (MEGKTSRYQDEAHDSAGSFNEETE) is disordered. 2 short sequence motifs (HXXHC) span residues 150 to 154 (HALHC) and 177 to 181 (HIEHC).

This sequence belongs to the ustYa family.

It functions in the pathway mycotoxin biosynthesis. Chlorinase; part of the gene cluster that mediates the biosynthesis of the mycotoxin cyclochlorotine, a hepatotoxic and carcinogenic cyclic chlorinated pentapeptide. Within the pathway, cctP2 catalyzes the formation of isocyclochlorotine via dichlorination of the Pro from the isocyclotine skeleton. The NRPS cctN initially catalyzes the condensation of L-serine (Ser), Pro, L-2-aminobutyrate (2Abu), Ser, and beta-Phe in this order to produce isocyclotine. After the dichlorination of Pro2 catalyzed by cctP2 to produce isocyclochlorotine, the cctO-mediated transacylation of isocyclochlorotine can furnish cyclochlorotine. The subsequent hydroxylation of cyclochlorotine by cctR yields hydroxycyclochlorotine as the final product. CctP1 probably acts as a phenylalanine aminomutase and provides the uncommon building block beta-Phe. Furthermore, 2Abu can be synthesized from threonine by one of the threonine dehydratases and transaminases localized outside of the cluster. The functions of the remaining proteins encoded by the cluster, cctM and cctT, have not been identified yet. The protein is Chlorinase cctP2 of Talaromyces islandicus (Penicillium islandicum).